An 826-amino-acid chain; its full sequence is Periplasmic nitrate reductase (826 aa).

The segment at residues 1–32 (MSISRREFLKANAAVAAATAVGATLPVKIVEA) is a signal peptide (tat-type signal). A 4Fe-4S Mo/W bis-MGD-type domain is found at 39–95 (IKWDKAPCRFCGVGCSVLVGTDNGKVVATKGDPESPVNKGLNCIKGYFLSKIMYGKD). [4Fe-4S] cluster-binding residues include C46, C49, C53, and C81. Residues K83, Q150, N175, C179, 212-219 (WGANMAEM), 262-264 (QSD), M372, Q376, N482, 508-509 (SD), K531, D558, and 716-725 (TGRVLEHWHT) contribute to the Mo-bis(molybdopterin guanine dinucleotide) site. Substrate is bound at residue F792. Positions 800 and 817 each coordinate Mo-bis(molybdopterin guanine dinucleotide).

It belongs to the prokaryotic molybdopterin-containing oxidoreductase family. NasA/NapA/NarB subfamily. Component of the periplasmic nitrate reductase NapAB complex composed of NapA and NapB. Requires [4Fe-4S] cluster as cofactor. It depends on Mo-bis(molybdopterin guanine dinucleotide) as a cofactor. Post-translationally, predicted to be exported by the Tat system. The position of the signal peptide cleavage has not been experimentally proven.

The protein resides in the periplasm. The catalysed reaction is 2 Fe(II)-[cytochrome] + nitrate + 2 H(+) = 2 Fe(III)-[cytochrome] + nitrite + H2O. Functionally, catalytic subunit of the periplasmic nitrate reductase complex NapAB. Receives electrons from NapB and catalyzes the reduction of nitrate to nitrite. The polypeptide is Periplasmic nitrate reductase (Shewanella halifaxensis (strain HAW-EB4)).